The primary structure comprises 334 residues: Holliday junction branch migration complex subunit RuvB (334 aa).

The segment at 4–184 (ADRLIQPQIQ…FGIPLRLEFY (181 aa)) is large ATPase domain (RuvB-L). Residues Arg-24, Gly-65, Lys-68, Thr-69, Thr-70, 131–133 (EDY), Arg-174, Tyr-184, and Arg-221 contribute to the ATP site. Mg(2+) is bound at residue Thr-69. The segment at 185–255 (NIKDLSTIVT…VAEHALDLLD (71 aa)) is small ATPAse domain (RuvB-S). A head domain (RuvB-H) region spans residues 258-334 (SEGFDYMDRK…YQHFELIKPE (77 aa)). Residues Arg-294, Arg-313, and Arg-318 each coordinate DNA.

This sequence belongs to the RuvB family. Homohexamer. Forms an RuvA(8)-RuvB(12)-Holliday junction (HJ) complex. HJ DNA is sandwiched between 2 RuvA tetramers; dsDNA enters through RuvA and exits via RuvB. An RuvB hexamer assembles on each DNA strand where it exits the tetramer. Each RuvB hexamer is contacted by two RuvA subunits (via domain III) on 2 adjacent RuvB subunits; this complex drives branch migration. In the full resolvosome a probable DNA-RuvA(4)-RuvB(12)-RuvC(2) complex forms which resolves the HJ.

It localises to the cytoplasm. The catalysed reaction is ATP + H2O = ADP + phosphate + H(+). The RuvA-RuvB-RuvC complex processes Holliday junction (HJ) DNA during genetic recombination and DNA repair, while the RuvA-RuvB complex plays an important role in the rescue of blocked DNA replication forks via replication fork reversal (RFR). RuvA specifically binds to HJ cruciform DNA, conferring on it an open structure. The RuvB hexamer acts as an ATP-dependent pump, pulling dsDNA into and through the RuvAB complex. RuvB forms 2 homohexamers on either side of HJ DNA bound by 1 or 2 RuvA tetramers; 4 subunits per hexamer contact DNA at a time. Coordinated motions by a converter formed by DNA-disengaged RuvB subunits stimulates ATP hydrolysis and nucleotide exchange. Immobilization of the converter enables RuvB to convert the ATP-contained energy into a lever motion, pulling 2 nucleotides of DNA out of the RuvA tetramer per ATP hydrolyzed, thus driving DNA branch migration. The RuvB motors rotate together with the DNA substrate, which together with the progressing nucleotide cycle form the mechanistic basis for DNA recombination by continuous HJ branch migration. Branch migration allows RuvC to scan DNA until it finds its consensus sequence, where it cleaves and resolves cruciform DNA. In Shewanella baltica (strain OS195), this protein is Holliday junction branch migration complex subunit RuvB.